Here is a 66-residue protein sequence, read N- to C-terminus: Large ribosomal subunit protein bL33c (66 aa).

The protein belongs to the bacterial ribosomal protein bL33 family.

The protein resides in the plastid. It is found in the chloroplast. The chain is Large ribosomal subunit protein bL33c from Acorus calamus (Sweet flag).